Reading from the N-terminus, the 176-residue chain is Protein singles bar (176 aa).

4 helical membrane passes run 13–35 (LGIR…LSRI), 71–91 (FLAT…CYAF), 111–131 (LASC…VVWL), and 140–160 (GFWA…AGIL). The region spanning 30–173 (FVLSRIGLLK…DAYLAFRHFR (144 aa)) is the MARVEL domain.

Its subcellular location is the membrane. Its function is as follows. Essential for myoblast fusion in developing embryos and pupae, and consequently is essential for muscle formation in adults. Required for progression past the pre-fusion complex stage of myoblast fusion. The polypeptide is Protein singles bar (Drosophila melanogaster (Fruit fly)).